The sequence spans 253 residues: MSTHRLVMVRHGESTWNQENRFCGWFDAELSEKGAEEAKKAAQAIKDAKMEFDICYTSVLKRAIRTLWTILDGTDQMWLPVVRTWRLNERHYGGLTGLNKAETAAKHGEEQVKIWRRSFDIPPPPMDEKHPYYKSISKERRYAGLKAGELPTCESLKDTIARALPFWNDEIAPQIKAGKRVLIAAHGNSLRGIVKHLEGMSDQAIMELNLPTGIPIVYELDQALKPTKPMRFLGDEETVRKAMEAVAAQGKAK.

Threonine 3 is subject to Phosphothreonine. Residues 10–17 (RHGESTWN), 23–24 (CG), arginine 62, 89–92 (ERHY), lysine 100, and 116–117 (RR) each bind substrate. Histidine 11 functions as the Tele-phosphohistidine intermediate in the catalytic mechanism. Position 14 is a phosphoserine (serine 14). The active-site Proton donor/acceptor is the glutamate 89. Serine 118 carries the phosphoserine modification. A phosphotyrosine mark is found at tyrosine 132 and tyrosine 133. Serine 135 bears the Phosphoserine mark. A Phosphothreonine modification is found at threonine 152. 187–188 (GN) provides a ligand contact to substrate.

This sequence belongs to the phosphoglycerate mutase family. BPG-dependent PGAM subfamily. As to quaternary structure, homodimer.

It catalyses the reaction (2R)-2-phosphoglycerate = (2R)-3-phosphoglycerate. It carries out the reaction (2R)-3-phospho-glyceroyl phosphate = (2R)-2,3-bisphosphoglycerate + H(+). In terms of biological role, interconversion of 3- and 2-phosphoglycerate with 2,3-bisphosphoglycerate as the primer of the reaction. Can also catalyze the reaction of EC 5.4.2.4 (synthase), but with a reduced activity. The polypeptide is Phosphoglycerate mutase 2 (PGAM2) (Bos taurus (Bovine)).